We begin with the raw amino-acid sequence, 215 residues long: Large ribosomal subunit protein uL4 (215 aa).

Residues 46-76 (TAKSKNRAEVSGGGRKPWAQKGGGRARAGSI) are disordered. Gly residues predominate over residues 56–71 (SGGGRKPWAQKGGGRA).

Belongs to the universal ribosomal protein uL4 family. Part of the 50S ribosomal subunit.

In terms of biological role, one of the primary rRNA binding proteins, this protein initially binds near the 5'-end of the 23S rRNA. It is important during the early stages of 50S assembly. It makes multiple contacts with different domains of the 23S rRNA in the assembled 50S subunit and ribosome. Functionally, forms part of the polypeptide exit tunnel. This Helicobacter pylori (strain HPAG1) protein is Large ribosomal subunit protein uL4.